A 388-amino-acid polypeptide reads, in one-letter code: Succinate--CoA ligase [ADP-forming] subunit beta (388 aa).

One can recognise an ATP-grasp domain in the interval 9-244 (KQLFARYGLP…QSQEDPREAQ (236 aa)). Residues Lys46, 53-55 (GRG), Glu99, Thr102, and Glu107 each bind ATP. The Mg(2+) site is built by Asn199 and Asp213. Residues Asn264 and 321 to 323 (GIV) each bind substrate.

It belongs to the succinate/malate CoA ligase beta subunit family. In terms of assembly, heterotetramer of two alpha and two beta subunits. Mg(2+) serves as cofactor.

The catalysed reaction is succinate + ATP + CoA = succinyl-CoA + ADP + phosphate. It catalyses the reaction GTP + succinate + CoA = succinyl-CoA + GDP + phosphate. It functions in the pathway carbohydrate metabolism; tricarboxylic acid cycle; succinate from succinyl-CoA (ligase route): step 1/1. Succinyl-CoA synthetase functions in the citric acid cycle (TCA), coupling the hydrolysis of succinyl-CoA to the synthesis of either ATP or GTP and thus represents the only step of substrate-level phosphorylation in the TCA. The beta subunit provides nucleotide specificity of the enzyme and binds the substrate succinate, while the binding sites for coenzyme A and phosphate are found in the alpha subunit. This is Succinate--CoA ligase [ADP-forming] subunit beta from Escherichia coli O139:H28 (strain E24377A / ETEC).